Reading from the N-terminus, the 60-residue chain is Large ribosomal subunit protein bL32 (60 aa).

The protein belongs to the bacterial ribosomal protein bL32 family.

The polypeptide is Large ribosomal subunit protein bL32 (Petrotoga mobilis (strain DSM 10674 / SJ95)).